The primary structure comprises 96 residues: UPF0213 protein Lreu_0682 (96 aa).

The 78-residue stretch at 4 to 81 folds into the GIY-YIG domain; sequence EKYYIYVLYC…KHQTRRQKEK (78 aa).

This sequence belongs to the UPF0213 family.

The chain is UPF0213 protein Lreu_0682 from Limosilactobacillus reuteri (strain DSM 20016) (Lactobacillus reuteri).